Here is a 335-residue protein sequence, read N- to C-terminus: Nuclear envelope-associated protein 2 (335 aa).

2 coiled-coil regions span residues 55–85 (RKEA…ELVA) and 125–260 (CSVL…LKKK). The Bipartite nuclear localization signal motif lies at 239–260 (KTKELESQLERQRRADQELKKK). A helical membrane pass occupies residues 312–329 (FWDTSGFKIVVSMSMLIL).

In terms of assembly, forms homomers and heteromers with NEAP1 and NEAP3. Interacts with SUN1 and SUN2.

The protein resides in the nucleus inner membrane. The protein localises to the nucleus. It is found in the nucleoplasm. In Arabidopsis thaliana (Mouse-ear cress), this protein is Nuclear envelope-associated protein 2.